The following is a 214-amino-acid chain: Adenylate kinase (214 aa).

Residue 15-20 participates in ATP binding; sequence GAGKGT. The interval 35-64 is NMP; the sequence is ASGDLFREAIKNQSVIGRKIAAIISQGGYV. AMP is bound by residues serine 36, arginine 41, 62-64, 90-93, and glutamine 97; these read GYV and GYPR. Residues 127–164 form an LID region; sequence NRVICNNCNSVYNLLFQKPLVENSCDQCSAKLVKRSDD. Arginine 128 contributes to the ATP binding site. 2 residues coordinate Zn(2+): cysteine 131 and cysteine 134. 137–138 is a binding site for ATP; the sequence is VY. Positions 151 and 154 each coordinate Zn(2+). Positions 161 and 172 each coordinate AMP. Leucine 200 lines the ATP pocket.

The protein belongs to the adenylate kinase family. Monomer.

The protein localises to the cytoplasm. The enzyme catalyses AMP + ATP = 2 ADP. Its pathway is purine metabolism; AMP biosynthesis via salvage pathway; AMP from ADP: step 1/1. In terms of biological role, catalyzes the reversible transfer of the terminal phosphate group between ATP and AMP. Plays an important role in cellular energy homeostasis and in adenine nucleotide metabolism. In Mycoplasma genitalium (strain ATCC 33530 / DSM 19775 / NCTC 10195 / G37) (Mycoplasmoides genitalium), this protein is Adenylate kinase.